The primary structure comprises 260 residues: Cytochrome c oxidase subunit 2 (260 aa).

The Mitochondrial intermembrane segment spans residues 1-43 (MILRSLSCRFLTIALCDAAEPWQLGFQDAATPMMQGIIDLHHD). The helical transmembrane segment at 44–64 (IFFFLILILVFVLWMLVRALW) threads the bilayer. Topologically, residues 65 to 84 (HFNEQTNPIPQRIVHGTTIE) are mitochondrial matrix. The chain crosses the membrane as a helical span at residues 85–105 (IIWTIFPSVILLFIAIPSFAL). Topologically, residues 106 to 260 (LYSMDGVLVD…VSNQLILQTN (155 aa)) are mitochondrial intermembrane. Residues His189, Cys224, Glu226, Cys228, His232, and Met235 each contribute to the Cu cation site. Mg(2+) is bound at residue Glu226.

This sequence belongs to the cytochrome c oxidase subunit 2 family. Component of the cytochrome c oxidase (complex IV, CIV), a multisubunit enzyme composed of a catalytic core of 3 subunits and several supernumerary subunits. The complex exists as a monomer or a dimer and forms supercomplexes (SCs) in the inner mitochondrial membrane with ubiquinol-cytochrome c oxidoreductase (cytochrome b-c1 complex, complex III, CIII). Cu cation is required as a cofactor.

The protein resides in the mitochondrion inner membrane. The catalysed reaction is 4 Fe(II)-[cytochrome c] + O2 + 8 H(+)(in) = 4 Fe(III)-[cytochrome c] + 2 H2O + 4 H(+)(out). Its function is as follows. Component of the cytochrome c oxidase, the last enzyme in the mitochondrial electron transport chain which drives oxidative phosphorylation. The respiratory chain contains 3 multisubunit complexes succinate dehydrogenase (complex II, CII), ubiquinol-cytochrome c oxidoreductase (cytochrome b-c1 complex, complex III, CIII) and cytochrome c oxidase (complex IV, CIV), that cooperate to transfer electrons derived from NADH and succinate to molecular oxygen, creating an electrochemical gradient over the inner membrane that drives transmembrane transport and the ATP synthase. Cytochrome c oxidase is the component of the respiratory chain that catalyzes the reduction of oxygen to water. Electrons originating from reduced cytochrome c in the intermembrane space (IMS) are transferred via the dinuclear copper A center (CU(A)) of subunit 2 and heme A of subunit 1 to the active site in subunit 1, a binuclear center (BNC) formed by heme A3 and copper B (CU(B)). The BNC reduces molecular oxygen to 2 water molecules using 4 electrons from cytochrome c in the IMS and 4 protons from the mitochondrial matrix. The polypeptide is Cytochrome c oxidase subunit 2 (COX2) (Triticum aestivum (Wheat)).